The sequence spans 628 residues: MEYFSERYDVIVIGAGHAGCEAGLAAARMGCRTLMCTMNLDSIGFMPCNPNIGGTAKGHLVREIDALGGEMGVNIDATFIQSRMLNTSKGPAVHSLRAQADKRNYSGRMKSVLERQHNLDLKQLEVVGIRIDNEGKVCGVITKNGAYFETKTIVLSTGTYLKGKVIIGDVSYSSGPNGFMPANDLSQSLLDLGIEIRRFKTGTPARVNRRSVDFSKMIEQPGDKRIVPFSFMSENLDRKQVSCYLTYTTENTTKVIRENINRSPLFNGSIKSVGPRYCPSIEDKIVRFPNKENHQIFIEPEGEDTNELYVDGASTSMPEDVQIAMYRTIIGLENVEFLRTGYAIEYDCINPLQLRPTLEFKKVEGLFGAGQLNGSSGYEEAASQGIIAGINAALKVKGKEPFILKRSDAYIGVLIDDLVTKGTEEPYRMMTSRSEYRLILRQDNADLRLTEMGYKIGLVTKERYDKYLERKNSIETEIKRIKNLYITPKKEVIEFLNSLGSSELKKSISLYELIKRPELDYFKLQLLDMDRPELNEDVQEEVNIISKYEGYIKKQLEQVQQFKKFENKFIPENIDYDEIKGLRIEANQKLKKIRPISIGQASRISGVSPADISVLLVYLEKKHREKLL.

FAD is bound at residue Gly-14–Gly-19. Residue Gly-274–Phe-288 coordinates NAD(+).

This sequence belongs to the MnmG family. Homodimer. Heterotetramer of two MnmE and two MnmG subunits. It depends on FAD as a cofactor.

Its subcellular location is the cytoplasm. Functionally, NAD-binding protein involved in the addition of a carboxymethylaminomethyl (cmnm) group at the wobble position (U34) of certain tRNAs, forming tRNA-cmnm(5)s(2)U34. The polypeptide is tRNA uridine 5-carboxymethylaminomethyl modification enzyme MnmG (Clostridium kluyveri (strain ATCC 8527 / DSM 555 / NBRC 12016 / NCIMB 10680 / K1)).